The sequence spans 418 residues: MRIMMNKKNIKRNVEKIIAQWDERTRKNKENFDFGELTLSTGLPGIILMLAELKNKDNSKIYQKKIDNYIEYIVSKLSTYGLLTGSLYSGAAGIALSILHLREDDEKYKNLLDSLNRYIEYFVREKIEGFNLENITPPDYDVIEGLSGILSYLLLINDEQYDDLKILIINFLSNLTKENNGLISLYIKSENQMSQSESEMYPLGCLNMGLAHGLAGVGCILAYAHIKGYSNEASLSALQKIIFIYEKFELERKKQFLWKDGLVADELKKEKVIREASFIRDAWCYGGPGISLLYLYGGLALDNDYFVDKAEKILESAMQRKLGIDSYMICHGYSGLIEICSLFKRLLNTKKFDSYMEEFNVNSEQILEEYGDESGTGFLEGISGCILVLSKFEYSINFTYWRQALLLFDDFLKGGKRK.

It to B.subtilis SpaC and S.epidermidis EpiC.

Its function is as follows. Could be implicated in the processing or the export process of the nisin lantibiotic. This chain is Nisin biosynthesis protein NisC (nisC), found in Lactococcus lactis subsp. lactis (Streptococcus lactis).